The sequence spans 399 residues: Elongation factor Tu 1 (399 aa).

One can recognise a tr-type G domain in the interval 17-208; that stretch reads KPHVNVGTIG…LDDYVEVPPR (192 aa). Residues 26–33 form a G1 region; that stretch reads GHVDHGKT. Residue 26–33 coordinates GTP; that stretch reads GHVDHGKT. T33 is a binding site for Mg(2+). Residues 62 to 66 form a G2 region; sequence GITIA. The G3 stretch occupies residues 83–86; it reads DCPG. Residues 83–87 and 138–141 each bind GTP; these read DCPGH and NKAD. The G4 stretch occupies residues 138–141; sequence NKAD. The G5 stretch occupies residues 175–177; that stretch reads SAL.

This sequence belongs to the TRAFAC class translation factor GTPase superfamily. Classic translation factor GTPase family. EF-Tu/EF-1A subfamily. In terms of assembly, monomer.

The protein resides in the cytoplasm. It carries out the reaction GTP + H2O = GDP + phosphate + H(+). In terms of biological role, GTP hydrolase that promotes the GTP-dependent binding of aminoacyl-tRNA to the A-site of ribosomes during protein biosynthesis. This Wolbachia sp. subsp. Brugia malayi (strain TRS) protein is Elongation factor Tu 1.